The chain runs to 393 residues: Major outer membrane porin, serovar L1 (393 aa).

The signal sequence occupies residues 1-22 (MKKLLKSVLVFAALSSASSLQA).

The protein belongs to the chlamydial porin (CP) (TC 1.B.2) family. In terms of assembly, part of a disulfide cross-linked outer membrane complex (COMC) composed of the major outer membrane porin (MOMP), the small cysteine-rich protein (OmcA) and the large cysteine-rich periplasmic protein (OmcB).

The protein resides in the cell outer membrane. In elementary bodies (EBs, the infectious stage, which is able to survive outside the host cell) provides the structural integrity of the outer envelope through disulfide cross-links with the small cysteine-rich protein and the large cysteine-rich periplasmic protein. It has been described in publications as the Sarkosyl-insoluble COMC (Chlamydia outer membrane complex), and serves as the functional equivalent of peptidoglycan. Functionally, permits diffusion of specific solutes through the outer membrane. The chain is Major outer membrane porin, serovar L1 (ompA) from Chlamydia trachomatis.